We begin with the raw amino-acid sequence, 179 residues long: Large ribosomal subunit protein uL5 (179 aa).

Belongs to the universal ribosomal protein uL5 family. Part of the 50S ribosomal subunit; part of the 5S rRNA/L5/L18/L25 subcomplex. Contacts the 5S rRNA and the P site tRNA. Forms a bridge to the 30S subunit in the 70S ribosome.

This is one of the proteins that bind and probably mediate the attachment of the 5S RNA into the large ribosomal subunit, where it forms part of the central protuberance. In the 70S ribosome it contacts protein S13 of the 30S subunit (bridge B1b), connecting the 2 subunits; this bridge is implicated in subunit movement. Contacts the P site tRNA; the 5S rRNA and some of its associated proteins might help stabilize positioning of ribosome-bound tRNAs. The polypeptide is Large ribosomal subunit protein uL5 (Bordetella avium (strain 197N)).